We begin with the raw amino-acid sequence, 277 residues long: Large ribosomal subunit protein uL2 (277 aa).

The interval glycine 222–lysine 277 is disordered.

Belongs to the universal ribosomal protein uL2 family. In terms of assembly, part of the 50S ribosomal subunit. Forms a bridge to the 30S subunit in the 70S ribosome.

In terms of biological role, one of the primary rRNA binding proteins. Required for association of the 30S and 50S subunits to form the 70S ribosome, for tRNA binding and peptide bond formation. It has been suggested to have peptidyltransferase activity; this is somewhat controversial. Makes several contacts with the 16S rRNA in the 70S ribosome. The chain is Large ribosomal subunit protein uL2 from Bartonella bacilliformis (strain ATCC 35685 / KC583 / Herrer 020/F12,63).